The following is a 236-amino-acid chain: Leucyl/phenylalanyl-tRNA--protein transferase (236 aa).

This sequence belongs to the L/F-transferase family.

It localises to the cytoplasm. It carries out the reaction N-terminal L-lysyl-[protein] + L-leucyl-tRNA(Leu) = N-terminal L-leucyl-L-lysyl-[protein] + tRNA(Leu) + H(+). It catalyses the reaction N-terminal L-arginyl-[protein] + L-leucyl-tRNA(Leu) = N-terminal L-leucyl-L-arginyl-[protein] + tRNA(Leu) + H(+). The enzyme catalyses L-phenylalanyl-tRNA(Phe) + an N-terminal L-alpha-aminoacyl-[protein] = an N-terminal L-phenylalanyl-L-alpha-aminoacyl-[protein] + tRNA(Phe). Functions in the N-end rule pathway of protein degradation where it conjugates Leu, Phe and, less efficiently, Met from aminoacyl-tRNAs to the N-termini of proteins containing an N-terminal arginine or lysine. The polypeptide is Leucyl/phenylalanyl-tRNA--protein transferase (Shewanella sp. (strain MR-4)).